We begin with the raw amino-acid sequence, 264 residues long: Thymidylate synthase (264 aa).

Arg-21 contacts dUMP. A (6R)-5,10-methylene-5,6,7,8-tetrahydrofolate-binding site is contributed by His-51. Position 126-127 (126-127 (RR)) interacts with dUMP. Cys-146 serves as the catalytic Nucleophile. Residues 166–169 (RSAD), Asn-177, and 207–209 (HLY) each bind dUMP. Residue Asp-169 coordinates (6R)-5,10-methylene-5,6,7,8-tetrahydrofolate. Ala-263 lines the (6R)-5,10-methylene-5,6,7,8-tetrahydrofolate pocket.

The protein belongs to the thymidylate synthase family. Bacterial-type ThyA subfamily. Homodimer.

The protein resides in the cytoplasm. It carries out the reaction dUMP + (6R)-5,10-methylene-5,6,7,8-tetrahydrofolate = 7,8-dihydrofolate + dTMP. Its pathway is pyrimidine metabolism; dTTP biosynthesis. Functionally, catalyzes the reductive methylation of 2'-deoxyuridine-5'-monophosphate (dUMP) to 2'-deoxythymidine-5'-monophosphate (dTMP) while utilizing 5,10-methylenetetrahydrofolate (mTHF) as the methyl donor and reductant in the reaction, yielding dihydrofolate (DHF) as a by-product. This enzymatic reaction provides an intracellular de novo source of dTMP, an essential precursor for DNA biosynthesis. The chain is Thymidylate synthase from Azotobacter vinelandii (strain DJ / ATCC BAA-1303).